We begin with the raw amino-acid sequence, 94 residues long: Cell division protein FtsB (94 aa).

Topologically, residues 1-8 (MRLRSPYW) are cytoplasmic. A helical transmembrane segment spans residues 9-26 (LFVVLILALAGLQYRLWV). Residues 27–94 (GDGSLAQVRD…DGETLYQLAK (68 aa)) are Periplasmic-facing. The stretch at 31-78 (LAQVRDLQKQIADQHGENERLLERNRILEAEVAELKKGTETVEERARH) forms a coiled coil.

It belongs to the FtsB family. In terms of assembly, part of a complex composed of FtsB, FtsL and FtsQ.

The protein resides in the cell inner membrane. Its function is as follows. Essential cell division protein. May link together the upstream cell division proteins, which are predominantly cytoplasmic, with the downstream cell division proteins, which are predominantly periplasmic. The protein is Cell division protein FtsB of Pseudomonas aeruginosa (strain ATCC 15692 / DSM 22644 / CIP 104116 / JCM 14847 / LMG 12228 / 1C / PRS 101 / PAO1).